The following is an 874-amino-acid chain: Bifunctional apolipoprotein N-acyltransferase/polyprenol monophosphomannose synthase (874 aa).

The apolipoprotein N-acyltransferase stretch occupies residues 1–593 (MKLGAWVAAQ…GRHRATSRSY (593 aa)). 5 helical membrane passes run 23–42 (TRLV…FPPR), 72–89 (YGLL…PWIG), 94–115 (PGPW…GLFA), 177–194 (VALV…IEKW), and 206–223 (AVVL…AAIV). The CN hydrolase domain maps to 241–497 (VTVAVVQGNV…PAYLDSQVRL (257 aa)). The Proton acceptor role is filled by E294. K359 is a catalytic residue. The Nucleophile role is filled by C409. Residues 509 to 526 (PILQWILVGAAAAVVLVA) form a helical membrane-spanning segment. 2 disordered regions span residues 533-609 (FPRP…NRPS) and 852-874 (RARP…DVTE). The segment at 594 to 874 (MTTGQPAPPA…SRVSRADVTE (281 aa)) is polyprenol monophosphomannose synthase.

It in the N-terminal section; belongs to the CN hydrolase family. Apolipoprotein N-acyltransferase subfamily. In the C-terminal section; belongs to the glycosyltransferase 2 family.

The protein localises to the cell membrane. The enzyme catalyses N-terminal S-1,2-diacyl-sn-glyceryl-L-cysteinyl-[lipoprotein] + a glycerophospholipid = N-acyl-S-1,2-diacyl-sn-glyceryl-L-cysteinyl-[lipoprotein] + a 2-acyl-sn-glycero-3-phospholipid + H(+). It carries out the reaction a di-trans,poly-cis-dolichyl phosphate + GDP-alpha-D-mannose = a di-trans,poly-cis-dolichyl beta-D-mannosyl phosphate + GDP. It functions in the pathway protein modification; lipoprotein biosynthesis (N-acyl transfer). Catalyzes the phospholipid dependent N-acylation of the N-terminal cysteine of apolipoprotein, the last step in lipoprotein maturation. Its function is as follows. Transfers mannose from GDP-mannose to lipid acceptors to form polyprenol monophosphomannose (PPM). PMM is an alkai-stable sugar donor which adds mannose-phosphate residues to triacylated-phosphatidyl-myo-inositol mannosides (PIM2), eventually leading to generation of the cell wall glycolipid lipoglycan modulins lipoarabinomannan (LAM) and lipomannan (LM). The sequence is that of Bifunctional apolipoprotein N-acyltransferase/polyprenol monophosphomannose synthase from Mycobacterium bovis (strain BCG / Pasteur 1173P2).